The chain runs to 1267 residues: Probable cation-transporting ATPase catp-6 (1267 aa).

Residues Met1–Arg32 lie on the Extracellular side of the membrane. The helical transmembrane segment at Thr33 to Trp53 threads the bilayer. Residues Lys54–Pro189 are Cytoplasmic-facing. Residues Ile190–Val210 traverse the membrane as a helical segment. The Extracellular segment spans residues Thr211–Glu217. A helical membrane pass occupies residues Tyr218–Tyr238. At Gln239 to Lys390 the chain is on the cytoplasmic side. A helical transmembrane segment spans residues Phe391–Ile411. Topologically, residues Met412–Ser424 are extracellular. The chain crosses the membrane as a helical span at residues Leu425 to Ile445. Topologically, residues Asn446–Met950 are cytoplasmic. Catalysis depends on Asp476, which acts as the 4-aspartylphosphate intermediate. Asp891 and Asp895 together coordinate Mg(2+). A helical transmembrane segment spans residues Ala951–Leu971. At Thr972–Phe976 the chain is on the extracellular side. Residues Met977–Phe997 traverse the membrane as a helical segment. Residues Tyr998–Ala1013 lie on the Cytoplasmic side of the membrane. A helical transmembrane segment spans residues Ser1014 to Phe1034. The Extracellular segment spans residues Ser1035–Ser1058. The helical transmembrane segment at Met1059–Tyr1079 threads the bilayer. Over Ser1080–Ala1097 the chain is Cytoplasmic. A helical membrane pass occupies residues Leu1098–Leu1118. The Extracellular segment spans residues Lys1119–Arg1132. The helical transmembrane segment at Ile1133–Phe1153 threads the bilayer. The Cytoplasmic segment spans residues Val1154–Tyr1267. Residues Glu1232–Glu1256 form a disordered region.

It belongs to the cation transport ATPase (P-type) (TC 3.A.3) family. Type V subfamily.

It localises to the membrane. The catalysed reaction is ATP + H2O = ADP + phosphate + H(+). This is Probable cation-transporting ATPase catp-6 from Caenorhabditis elegans.